A 398-amino-acid polypeptide reads, in one-letter code: SEC12-like protein 1 (398 aa).

Met-1 bears the N-acetylmethionine mark. Topologically, residues 1–337 are cytoplasmic; the sequence is MEIEEASRES…TVPKEWKEWQ (337 aa). 5 WD repeats span residues 71–110, 120–159, 162–201, 252–291, and 296–334; these read DSDG…TGIT, QNAG…VILD, KAHK…PLST, LSRK…IYHY, and HLGQ…KEWK. Residues 338–358 traverse the membrane as a helical segment; the sequence is IYALLFCLFMASVIAAYVFFE. Residues 359 to 398 are Lumenal-facing; sequence NSDSFWKLPMGKDQKRPKISLFGGSSSTPSEDHSRWNLDL.

In terms of tissue distribution, ubiquitous with higher levels in flowers, roots and senescing leaves.

Its subcellular location is the endoplasmic reticulum membrane. Its function is as follows. Involved in Pi uptake by facilitating the trafficking of PHT1-1/PHT1;1 from the endoplasmic reticulum to the plasma membrane. This chain is SEC12-like protein 1 (PHF1), found in Arabidopsis thaliana (Mouse-ear cress).